The primary structure comprises 1076 residues: Histone deacetylase 4 (1076 aa).

Positions 66–169 (REQQLQQELL…GKESAVASTE (104 aa)) form a coiled coil. Residues 117–312 (MLAMKHQQEL…NSSSGNVSTE (196 aa)) are interaction with MEF2A. Positions 132–162 (KLERHRQEQELEKQHREQKLQQLKNKEKGKE) are enriched in basic and acidic residues. 3 disordered regions span residues 132–166 (KLERHRQEQELEKQHREQKLQQLKNKEKGKESAVA), 205–225 (TQHSSLDQSSPPQSGVSASYN), and 239–323 (PLRK…PSAP). Over residues 205-224 (TQHSSLDQSSPPQSGVSASY) the composition is skewed to polar residues. Position 209 is a phosphoserine (Ser-209). At Ser-245 the chain carries Phosphoserine; by CaMK4 and SIK1. A compositionally biased stretch (basic and acidic residues) spans 258–273 (KVAERRSSPLLRRKDG). The segment covering 289 to 310 (SACSSAPGSGPSSPNSSSGNVS) has biased composition (low complexity). The PxLPxI/L motif; mediates interaction with ANKRA2 and 14-3-3 proteins motif lies at 348-353 (PSLPNI). Phosphoserine is present on Ser-349. Ser-465 carries the phosphoserine; by CaMK4 and SIK1 modification. 3 disordered regions span residues 506 to 529 (ISKPSEPPRQPESHPEETEEELRE), 541 to 580 (RLPGQKEPSLAGVQVKQEPIESEEEEAEATRETEPGQRPA), and 622 to 645 (RPLSRAQSSPASATFPMSVQEPPT). The segment covering 514-529 (RQPESHPEETEEELRE) has biased composition (basic and acidic residues). Residue Lys-556 forms a Glycyl lysine isopeptide (Lys-Gly) (interchain with G-Cter in SUMO) linkage. Ser-562 carries the phosphoserine modification. Over residues 626 to 638 (RAQSSPASATFPM) the composition is skewed to polar residues. Ser-629 bears the Phosphoserine; by CaMK4 mark. Ser-630 carries the phosphoserine modification. A histone deacetylase region spans residues 652 to 1076 (GLVYDTLMLK…EEPMEEEPPL (425 aa)). Zn(2+) is bound by residues Cys-664, Cys-666, His-672, and Cys-743. His-795 is a catalytic residue. The Nuclear export signal signature appears at 1043–1076 (EEAETVTAMASLSVGVKPAEKRSEEEPMEEEPPL).

It belongs to the histone deacetylase family. HD type 2 subfamily. Homodimer. Homodimerization via its N-terminal domain. Interacts with HDAC7. Interacts with MEF2A, MEF2C, MEF2D, MORC2 and NR2C1. Interacts with a 14-3-3 chaperone proteins in a phosphorylation dependent manner. Interacts with 14-3-3 protein YWHAB. Interacts with BTBD14B. Interacts with KDM5B. Interacts (via PxLPxI/L motif) with ANKRA2 (via ankyrin repeats). Interacts with CUL7 (as part of the 3M complex); negatively regulated by ANKRA2. Interacts with EP300 in the presence of TFAP2C. Interacts with AHRR. Interacts with MYOCD. Interacts with HSPA1A and HSPA1B leading to their deacetylation at 'Lys-77'. Interacts with ZBTB7B; the interaction allows the recruitment of HDAC4 on CD8 loci for deacetylation and possible inhibition of CD8 genes expression. Interacts with DHX36. Interacts with SIK3; this interaction leads to HDAC4 retention in the cytoplasm. Interacts with ZNF638. Phosphorylated by CaMK4 at Ser-245, Ser-465 and Ser-629. Phosphorylation at other residues by CaMK2D is required for the interaction with 14-3-3. Phosphorylation at Ser-349, within the PxLPxI/L motif, impairs the binding of ANKRA2 but generates a high-affinity docking site for 14-3-3. In terms of processing, sumoylation on Lys-556 is promoted by the E3 SUMO-protein ligase RANBP2, and prevented by phosphorylation by CaMK4.

The protein localises to the nucleus. It is found in the cytoplasm. The enzyme catalyses N(6)-acetyl-L-lysyl-[histone] + H2O = L-lysyl-[histone] + acetate. Functionally, responsible for the deacetylation of lysine residues on the N-terminal part of the core histones (H2A, H2B, H3 and H4). Histone deacetylation gives a tag for epigenetic repression and plays an important role in transcriptional regulation, cell cycle progression and developmental events. Histone deacetylases act via the formation of large multiprotein complexes. Involved in muscle maturation via its interaction with the myocyte enhancer factors such as MEF2A, MEF2C and MEF2D. Deacetylates HSPA1A and HSPA1A at 'Lys-77' leading to their preferential binding to co-chaperone STUB1. The chain is Histone deacetylase 4 (Hdac4) from Mus musculus (Mouse).